Reading from the N-terminus, the 102-residue chain is Large ribosomal subunit protein bL21 (102 aa).

The protein belongs to the bacterial ribosomal protein bL21 family. As to quaternary structure, part of the 50S ribosomal subunit. Contacts protein L20.

In terms of biological role, this protein binds to 23S rRNA in the presence of protein L20. This chain is Large ribosomal subunit protein bL21, found in Finegoldia magna (strain ATCC 29328 / DSM 20472 / WAL 2508) (Peptostreptococcus magnus).